A 237-amino-acid chain; its full sequence is Leucyl/phenylalanyl-tRNA--protein transferase (237 aa).

The protein belongs to the L/F-transferase family.

The protein resides in the cytoplasm. The enzyme catalyses N-terminal L-lysyl-[protein] + L-leucyl-tRNA(Leu) = N-terminal L-leucyl-L-lysyl-[protein] + tRNA(Leu) + H(+). It catalyses the reaction N-terminal L-arginyl-[protein] + L-leucyl-tRNA(Leu) = N-terminal L-leucyl-L-arginyl-[protein] + tRNA(Leu) + H(+). The catalysed reaction is L-phenylalanyl-tRNA(Phe) + an N-terminal L-alpha-aminoacyl-[protein] = an N-terminal L-phenylalanyl-L-alpha-aminoacyl-[protein] + tRNA(Phe). Its function is as follows. Functions in the N-end rule pathway of protein degradation where it conjugates Leu, Phe and, less efficiently, Met from aminoacyl-tRNAs to the N-termini of proteins containing an N-terminal arginine or lysine. The polypeptide is Leucyl/phenylalanyl-tRNA--protein transferase (Shewanella baltica (strain OS195)).